Reading from the N-terminus, the 884-residue chain is Cytosolic carboxypeptidase-like protein 5 (884 aa).

The 414-residue stretch at 157 to 570 folds into the Peptidase M14 domain; the sequence is YPFSYSDCQD…AMAIAALDMA (414 aa). Positions 252 and 255 each coordinate Zn(2+). Disordered stretches follow at residues 343 to 364 and 376 to 401; these read HPQS…PLSD and HLGH…KASG. His434 serves as a coordination point for Zn(2+). The Proton donor/acceptor role is filled by Glu516. Disordered stretches follow at residues 603–737 and 784–859; these read LSST…HSTG and QVRP…RICY. Residues 620–635 show a composition bias toward polar residues; sequence PPRSNSGLPVSCSENP. Low complexity-rich tracts occupy residues 641–666 and 714–737; these read SFST…NSPS and PTSS…HSTG. Ser839 carries the phosphoserine modification. Residues 846–857 are compositionally biased toward polar residues; it reads ISCSLSDSQSRI.

This sequence belongs to the peptidase M14 family. It depends on Zn(2+) as a cofactor.

It localises to the cytoplasm. It is found in the cytosol. The protein resides in the nucleus. Its subcellular location is the cytoskeleton. The protein localises to the spindle. It localises to the midbody. The enzyme catalyses gamma-L-glutamyl-L-glutamyl-[protein] + H2O = L-glutamyl-[protein] + L-glutamate. It carries out the reaction (L-glutamyl)(n+1)-gamma-L-glutamyl-L-glutamyl-[protein] + H2O = (L-glutamyl)(n)-gamma-L-glutamyl-L-glutamyl-[protein] + L-glutamate. It catalyses the reaction C-terminal L-alpha-aminoacyl-L-glutamyl-[tubulin] + H2O = C-terminal L-alpha-aminoacyl-[tubulin] + L-glutamate. The catalysed reaction is C-terminal L-alpha-aminoacyl-L-glutamyl-L-glutamyl-[tubulin] + H2O = C-terminal L-alpha-aminoacyl-L-glutamyl-[tubulin] + L-glutamate. Functionally, metallocarboxypeptidase that mediates deglutamylation of tubulin and non-tubulin target proteins. Catalyzes the removal of polyglutamate side chains present on the gamma-carboxyl group of glutamate residues within the C-terminal tail of alpha- and beta-tubulin. Cleaves alpha- and gamma-linked polyglutamate tubulin side-chain, as well as the branching point glutamate. Also catalyzes the removal of alpha-linked glutamate residues from the carboxy-terminus of alpha-tubulin. Mediates deglutamylation of nucleotidyltransferase CGAS, leading to CGAS antiviral defense response activation. This is Cytosolic carboxypeptidase-like protein 5 (AGBL5) from Ailuropoda melanoleuca (Giant panda).